Reading from the N-terminus, the 334-residue chain is Protein CapI (334 aa).

Ser126 contributes to the substrate binding site. Residue Tyr151 is the Proton acceptor of the active site.

Belongs to the NAD(P)-dependent epimerase/dehydratase family.

It participates in capsule biogenesis; capsule polysaccharide biosynthesis. Required for the biosynthesis of type 1 capsular polysaccharide. The sequence is that of Protein CapI (capI) from Staphylococcus aureus.